Consider the following 472-residue polypeptide: Sulfate adenylyltransferase subunit 1 (472 aa).

A tr-type G domain is found at 24-240 (KSLLRFLTCG…ENAEVGTRDL (217 aa)). The G1 stretch occupies residues 33–40 (GSVDDGKS). 33–40 (GSVDDGKS) is a binding site for GTP. Residues 91 to 95 (GITID) form a G2 region. A G3 region spans residues 112-115 (DTPG). GTP is bound by residues 112-116 (DTPGH) and 167-170 (NKMD). Residues 167–170 (NKMD) are G4. The interval 204–206 (SAL) is G5.

Belongs to the TRAFAC class translation factor GTPase superfamily. Classic translation factor GTPase family. CysN/NodQ subfamily. In terms of assembly, heterodimer composed of CysD, the smaller subunit, and CysN.

The catalysed reaction is sulfate + ATP + H(+) = adenosine 5'-phosphosulfate + diphosphate. It participates in sulfur metabolism; hydrogen sulfide biosynthesis; sulfite from sulfate: step 1/3. In terms of biological role, with CysD forms the ATP sulfurylase (ATPS) that catalyzes the adenylation of sulfate producing adenosine 5'-phosphosulfate (APS) and diphosphate, the first enzymatic step in sulfur assimilation pathway. APS synthesis involves the formation of a high-energy phosphoric-sulfuric acid anhydride bond driven by GTP hydrolysis by CysN coupled to ATP hydrolysis by CysD. This Tolumonas auensis (strain DSM 9187 / NBRC 110442 / TA 4) protein is Sulfate adenylyltransferase subunit 1.